The following is a 682-amino-acid chain: 1,4-alpha-glucan-branching enzyme (682 aa).

2 residues coordinate (1,4-alpha-D-glucosyl)n: Trp-88 and Lys-124. Asp-342 (nucleophile) is an active-site residue. The Proton donor role is filled by Glu-397.

It belongs to the glycosyl hydrolase 13 family. GlgB subfamily.

It localises to the cytoplasm. It catalyses the reaction Transfers a segment of a (1-&gt;4)-alpha-D-glucan chain to a primary hydroxy group in a similar glucan chain.. It functions in the pathway glycan biosynthesis; glycogen biosynthesis. In terms of biological role, glycogen-branching enzyme participates in the glycogen biosynthetic process along with glycogenin and glycogen synthase. Generates alpha-1,6-glucosidic branches from alpha-1,4-linked glucose chains, to increase solubility of the glycogen polymer. The sequence is that of 1,4-alpha-glucan-branching enzyme (GLC3) from Cryptococcus neoformans var. neoformans serotype D (strain B-3501A) (Filobasidiella neoformans).